The sequence spans 20 residues: Ranalexin-1Ca (20 aa).

The cysteines at positions 14 and 20 are disulfide-linked.

Expressed by the skin glands.

The protein localises to the secreted. In terms of biological role, antibacterial activity against Gram-positive bacterium S.aureus (MIC=17 uM) and Gram-negative bacterium E.coli (MIC=4 uM). Has activity against C.albicans (MIC=14 uM). The sequence is that of Ranalexin-1Ca from Lithobates clamitans (Green frog).